Here is a 344-residue protein sequence, read N- to C-terminus: tRNA N6-adenosine threonylcarbamoyltransferase (344 aa).

Fe cation contacts are provided by H116 and H120. Substrate-binding positions include 138–142 (LVSGG), D171, G184, D188, and N277. Residue D307 coordinates Fe cation.

The protein belongs to the KAE1 / TsaD family. Fe(2+) serves as cofactor.

The protein localises to the cytoplasm. It catalyses the reaction L-threonylcarbamoyladenylate + adenosine(37) in tRNA = N(6)-L-threonylcarbamoyladenosine(37) in tRNA + AMP + H(+). Its function is as follows. Required for the formation of a threonylcarbamoyl group on adenosine at position 37 (t(6)A37) in tRNAs that read codons beginning with adenine. Is involved in the transfer of the threonylcarbamoyl moiety of threonylcarbamoyl-AMP (TC-AMP) to the N6 group of A37, together with TsaE and TsaB. TsaD likely plays a direct catalytic role in this reaction. The protein is tRNA N6-adenosine threonylcarbamoyltransferase of Latilactobacillus sakei subsp. sakei (strain 23K) (Lactobacillus sakei subsp. sakei).